The primary structure comprises 148 residues: MLKAFKEFAVKGNALDMAVGVILGASFGTIVKSLVDDLIMPPIGLVLGGVDFSNLFVTLRDGAAPGPYASLAAAKQAGAVTLNVGVFANTVVSFTIVAFAVFLLVRGVNTLRERLEGPAAPKQQACPFCFSKIDVRATRCPHCTATIG.

2 helical membrane-spanning segments follow: residues 15–35 and 84–104; these read LDMA…KSLV and VGVF…VFLL.

The protein belongs to the MscL family. Homopentamer.

The protein resides in the cell inner membrane. Functionally, channel that opens in response to stretch forces in the membrane lipid bilayer. May participate in the regulation of osmotic pressure changes within the cell. In Nitratidesulfovibrio vulgaris (strain DSM 19637 / Miyazaki F) (Desulfovibrio vulgaris), this protein is Large-conductance mechanosensitive channel.